Reading from the N-terminus, the 94-residue chain is Co-chaperonin GroES (94 aa).

It belongs to the GroES chaperonin family. As to quaternary structure, heptamer of 7 subunits arranged in a ring. Interacts with the chaperonin GroEL.

It localises to the cytoplasm. Together with the chaperonin GroEL, plays an essential role in assisting protein folding. The GroEL-GroES system forms a nano-cage that allows encapsulation of the non-native substrate proteins and provides a physical environment optimized to promote and accelerate protein folding. GroES binds to the apical surface of the GroEL ring, thereby capping the opening of the GroEL channel. The chain is Co-chaperonin GroES from Alkaliphilus metalliredigens (strain QYMF).